Reading from the N-terminus, the 88-residue chain is Putative membrane protein insertion efficiency factor (88 aa).

The protein belongs to the UPF0161 family.

The protein resides in the cell inner membrane. In terms of biological role, could be involved in insertion of integral membrane proteins into the membrane. This is Putative membrane protein insertion efficiency factor from Prochlorococcus marinus (strain MIT 9313).